The sequence spans 387 residues: Patatin group J-1 (387 aa).

An N-terminal signal peptide occupies residues 1 to 23 (MATTKSFLILIVMILATTSSTFA). The PNPLA domain occupies 32 to 230 (LSIDGGGIKG…TVGDPALLSL (199 aa)). Positions 36–41 (GGGIKG) match the GXGXXG motif. Positions 75-79 (GTSTG) match the GXSXG motif. The active-site Nucleophile is S77. Residue N115 is glycosylated (N-linked (GlcNAc...) asparagine). The Proton acceptor role is filled by D216. A DGA/G motif is present at residues 216-218 (DGG). Residues 322 to 385 (ENALTGTTTE…NRKKLRANKA (64 aa)) adopt a coiled-coil conformation.

Belongs to the patatin family. As to expression, tuber.

It localises to the vacuole. Functionally, probable lipolytic acyl hydrolase (LAH), an activity which is thought to be involved in the response of tubers to pathogens. The chain is Patatin group J-1 from Solanum tuberosum (Potato).